A 333-amino-acid polypeptide reads, in one-letter code: Ketol-acid reductoisomerase (NADP(+)) (333 aa).

Residues 2–182 enclose the KARI N-terminal Rossmann domain; sequence ANIYYDADCD…GGGRAGILET (181 aa). NADP(+) contacts are provided by residues 25 to 28, K48, S51, S53, and 83 to 86; these read YGSQ and DTIQ. H108 is a catalytic residue. Position 134 (G134) interacts with NADP(+). The KARI C-terminal knotted domain occupies 183–331; it reads SFREETETDL…KKLRSMMKWL (149 aa). Residues D191, E195, E227, and E231 each coordinate Mg(2+). S252 serves as a coordination point for substrate.

Belongs to the ketol-acid reductoisomerase family. Mg(2+) is required as a cofactor.

It catalyses the reaction (2R)-2,3-dihydroxy-3-methylbutanoate + NADP(+) = (2S)-2-acetolactate + NADPH + H(+). The catalysed reaction is (2R,3R)-2,3-dihydroxy-3-methylpentanoate + NADP(+) = (S)-2-ethyl-2-hydroxy-3-oxobutanoate + NADPH + H(+). The protein operates within amino-acid biosynthesis; L-isoleucine biosynthesis; L-isoleucine from 2-oxobutanoate: step 2/4. Its pathway is amino-acid biosynthesis; L-valine biosynthesis; L-valine from pyruvate: step 2/4. Its function is as follows. Involved in the biosynthesis of branched-chain amino acids (BCAA). Catalyzes an alkyl-migration followed by a ketol-acid reduction of (S)-2-acetolactate (S2AL) to yield (R)-2,3-dihydroxy-isovalerate. In the isomerase reaction, S2AL is rearranged via a Mg-dependent methyl migration to produce 3-hydroxy-3-methyl-2-ketobutyrate (HMKB). In the reductase reaction, this 2-ketoacid undergoes a metal-dependent reduction by NADPH to yield (R)-2,3-dihydroxy-isovalerate. In Leptospira borgpetersenii serovar Hardjo-bovis (strain JB197), this protein is Ketol-acid reductoisomerase (NADP(+)).